We begin with the raw amino-acid sequence, 832 residues long: Beta-galactosidase (832 aa).

The signal sequence occupies residues 1 to 25 (MALKLVLMLMVALLAAVWSPPAVTA). Glu-183 acts as the Proton donor in catalysis. The active-site Nucleophile is Glu-252. In terms of domain architecture, SUEL-type lectin spans 741-832 (AYGRPKVHLS…KKLAVEAICE (92 aa)).

It belongs to the glycosyl hydrolase 35 family.

The protein resides in the secreted. Its subcellular location is the extracellular space. The protein localises to the apoplast. It carries out the reaction Hydrolysis of terminal non-reducing beta-D-galactose residues in beta-D-galactosides.. This Asparagus officinalis (Garden asparagus) protein is Beta-galactosidase.